The following is a 261-amino-acid chain: Putative hydro-lyase SH0274 (261 aa).

The protein belongs to the D-glutamate cyclase family.

This Staphylococcus haemolyticus (strain JCSC1435) protein is Putative hydro-lyase SH0274.